Reading from the N-terminus, the 254-residue chain is Putative epimerase LsrE (254 aa).

A helical transmembrane segment spans residues 14 to 34 (VALLASYPLSVGILAGQWIAL). H50, D52, and H81 together coordinate a divalent metal cation. The active-site Proton acceptor is the D52. Substrate is bound by residues H81, 166-169 (GYGS), 199-201 (DGS), and 221-222 (GS). Residue D199 participates in a divalent metal cation binding. Catalysis depends on D199, which acts as the Proton donor.

It belongs to the ribulose-phosphate 3-epimerase family. A divalent metal cation is required as a cofactor.

It localises to the cell membrane. This is Putative epimerase LsrE (lsrE) from Salmonella choleraesuis (strain SC-B67).